The sequence spans 313 residues: Porphobilinogen deaminase (313 aa).

An S-(dipyrrolylmethanemethyl)cysteine modification is found at Cys241.

This sequence belongs to the HMBS family. Monomer. It depends on dipyrromethane as a cofactor.

It catalyses the reaction 4 porphobilinogen + H2O = hydroxymethylbilane + 4 NH4(+). The protein operates within porphyrin-containing compound metabolism; protoporphyrin-IX biosynthesis; coproporphyrinogen-III from 5-aminolevulinate: step 2/4. Its pathway is porphyrin-containing compound metabolism; chlorophyll biosynthesis. Tetrapolymerization of the monopyrrole PBG into the hydroxymethylbilane pre-uroporphyrinogen in several discrete steps. This is Porphobilinogen deaminase from Chlorobium phaeobacteroides (strain BS1).